Here is a 356-residue protein sequence, read N- to C-terminus: sn-glycerol-3-phosphate import ATP-binding protein UgpC (356 aa).

Positions 4–235 (LKLQAVTKSW…PASLFVASFI (232 aa)) constitute an ABC transporter domain. An ATP-binding site is contributed by 37 to 44 (GPSGCGKS).

Belongs to the ABC transporter superfamily. sn-glycerol-3-phosphate importer (TC 3.A.1.1.3) family. As to quaternary structure, the complex is composed of two ATP-binding proteins (UgpC), two transmembrane proteins (UgpA and UgpE) and a solute-binding protein (UgpB).

Its subcellular location is the cell inner membrane. It catalyses the reaction sn-glycerol 3-phosphate(out) + ATP + H2O = sn-glycerol 3-phosphate(in) + ADP + phosphate + H(+). Functionally, part of the ABC transporter complex UgpBAEC involved in sn-glycerol-3-phosphate (G3P) import. Responsible for energy coupling to the transport system. The sequence is that of sn-glycerol-3-phosphate import ATP-binding protein UgpC from Escherichia coli (strain UTI89 / UPEC).